Consider the following 426-residue polypeptide: Histidine--tRNA ligase (426 aa).

This sequence belongs to the class-II aminoacyl-tRNA synthetase family. In terms of assembly, homodimer.

The protein localises to the cytoplasm. The catalysed reaction is tRNA(His) + L-histidine + ATP = L-histidyl-tRNA(His) + AMP + diphosphate + H(+). This is Histidine--tRNA ligase from Streptococcus agalactiae serotype III (strain NEM316).